The sequence spans 146 residues: Prefoldin subunit alpha (146 aa).

The protein belongs to the prefoldin alpha subunit family. In terms of assembly, heterohexamer of two alpha and four beta subunits.

The protein localises to the cytoplasm. Functionally, molecular chaperone capable of stabilizing a range of proteins. Seems to fulfill an ATP-independent, HSP70-like function in archaeal de novo protein folding. This chain is Prefoldin subunit alpha, found in Methanococcus vannielii (strain ATCC 35089 / DSM 1224 / JCM 13029 / OCM 148 / SB).